A 260-amino-acid chain; its full sequence is 2-amino-3,7-dideoxy-D-threo-hept-6-ulosonate synthase 1 (260 aa).

Asp26 functions as the Proton acceptor in the catalytic mechanism. Residues 26 to 30 (DHGIT) and 144 to 146 (YPR) each bind 1-deoxy-D-threo-hexo-2,5-diulose 6-phosphate. The Proton donor role is filled by Tyr144. Lys172 acts as the Schiff-base intermediate with substrate in catalysis. 1-deoxy-D-threo-hexo-2,5-diulose 6-phosphate is bound by residues 194–195 (GG) and 221–222 (GR).

The protein belongs to the DeoC/FbaB aldolase family. ADHS subfamily. As to quaternary structure, homodecamer.

It carries out the reaction 1-deoxy-D-threo-hexo-2,5-diulose 6-phosphate + L-aspartate 4-semialdehyde = 2,3-dioxopropyl phosphate + 2-amino-2,3,7-trideoxy-D-lyxo-hept-6-ulosonate. Catalyzes a transaldol reaction between 6-deoxy-5-ketofructose 1-phosphate (DKFP) and L-aspartate semialdehyde (ASA) with an elimination of hydroxypyruvaldehyde phosphate to yield 2-amino-3,7-dideoxy-D-threo-hept-6-ulosonate (ADH). Plays a key role in an alternative pathway of the biosynthesis of 3-dehydroquinate (DHQ), which is involved in the canonical pathway for the biosynthesis of aromatic amino acids. The protein is 2-amino-3,7-dideoxy-D-threo-hept-6-ulosonate synthase 1 of Archaeoglobus fulgidus (strain ATCC 49558 / DSM 4304 / JCM 9628 / NBRC 100126 / VC-16).